An 862-amino-acid polypeptide reads, in one-letter code: Protein SEY1 (862 aa).

The Cytoplasmic segment spans residues 1 to 747; sequence MVSNGHFASA…KRSAIGGMTQ (747 aa). A GB1/RHD3-type G domain is found at 49-306; sequence GFNYHLISVF…IPADGFAVYA (258 aa). 59–66 is a GTP binding site; the sequence is GSQSTGKS. Residues 481 to 507 are a coiled coil; that stretch reads SNYTQELALYQKDLEKISAQLRKDEMR. The chain crosses the membrane as a helical span at residues 748–768; the sequence is IPVYFYILLLALGWNEIVAVL. The Lumenal segment spans residues 769–771; it reads RNP. A helical transmembrane segment spans residues 772–792; the sequence is LYFFMLFLCAVGAFVTYQLNL. Topologically, residues 793–862 are cytoplasmic; sequence WGPMIKMAEA…DDDDEDEGSW (70 aa). Positions 819 to 862 are disordered; the sequence is LEPSEAGPHAARYKNSTEEYEMSNVKAPQRTNSGDDDDEDEGSW. The span at 852–862 shows a compositional bias: acidic residues; sequence GDDDDEDEGSW.

It belongs to the TRAFAC class dynamin-like GTPase superfamily. GB1/RHD3 GTPase family. RHD3 subfamily.

The protein resides in the endoplasmic reticulum membrane. In terms of biological role, cooperates with the reticulon proteins and tubule-shaping DP1 family proteins to generate and maintain the structure of the tubular endoplasmic reticulum network. Has GTPase activity, which is required for its function in ER organization. This chain is Protein SEY1, found in Uncinocarpus reesii (strain UAMH 1704).